A 333-amino-acid polypeptide reads, in one-letter code: 4-hydroxy-3-methylbut-2-enyl diphosphate reductase (333 aa).

Cysteine 33 is a binding site for [4Fe-4S] cluster. Positions 62 and 95 each coordinate (2E)-4-hydroxy-3-methylbut-2-enyl diphosphate. Dimethylallyl diphosphate is bound by residues histidine 62 and histidine 95. Residues histidine 62 and histidine 95 each contribute to the isopentenyl diphosphate site. Cysteine 117 contacts [4Fe-4S] cluster. Histidine 145 is a binding site for (2E)-4-hydroxy-3-methylbut-2-enyl diphosphate. Residue histidine 145 coordinates dimethylallyl diphosphate. Histidine 145 provides a ligand contact to isopentenyl diphosphate. Catalysis depends on glutamate 147, which acts as the Proton donor. Threonine 186 lines the (2E)-4-hydroxy-3-methylbut-2-enyl diphosphate pocket. Cysteine 216 contacts [4Fe-4S] cluster. (2E)-4-hydroxy-3-methylbut-2-enyl diphosphate is bound by residues serine 244, serine 245, asparagine 246, and serine 289. Dimethylallyl diphosphate-binding residues include serine 244, serine 245, asparagine 246, and serine 289. The isopentenyl diphosphate site is built by serine 244, serine 245, asparagine 246, and serine 289.

Belongs to the IspH family. [4Fe-4S] cluster is required as a cofactor.

It catalyses the reaction isopentenyl diphosphate + 2 oxidized [2Fe-2S]-[ferredoxin] + H2O = (2E)-4-hydroxy-3-methylbut-2-enyl diphosphate + 2 reduced [2Fe-2S]-[ferredoxin] + 2 H(+). The catalysed reaction is dimethylallyl diphosphate + 2 oxidized [2Fe-2S]-[ferredoxin] + H2O = (2E)-4-hydroxy-3-methylbut-2-enyl diphosphate + 2 reduced [2Fe-2S]-[ferredoxin] + 2 H(+). Its pathway is isoprenoid biosynthesis; dimethylallyl diphosphate biosynthesis; dimethylallyl diphosphate from (2E)-4-hydroxy-3-methylbutenyl diphosphate: step 1/1. It participates in isoprenoid biosynthesis; isopentenyl diphosphate biosynthesis via DXP pathway; isopentenyl diphosphate from 1-deoxy-D-xylulose 5-phosphate: step 6/6. In terms of biological role, catalyzes the conversion of 1-hydroxy-2-methyl-2-(E)-butenyl 4-diphosphate (HMBPP) into a mixture of isopentenyl diphosphate (IPP) and dimethylallyl diphosphate (DMAPP). Acts in the terminal step of the DOXP/MEP pathway for isoprenoid precursor biosynthesis. The protein is 4-hydroxy-3-methylbut-2-enyl diphosphate reductase of Corynebacterium diphtheriae (strain ATCC 700971 / NCTC 13129 / Biotype gravis).